A 401-amino-acid chain; its full sequence is Imidazolonepropionase (401 aa).

Fe(3+)-binding residues include H70 and H72. H70 and H72 together coordinate Zn(2+). 4-imidazolone-5-propanoate is bound by residues R79, Y142, and H175. Y142 lines the N-formimidoyl-L-glutamate pocket. H238 is a Fe(3+) binding site. H238 provides a ligand contact to Zn(2+). Q241 lines the 4-imidazolone-5-propanoate pocket. D313 is a binding site for Fe(3+). Zn(2+) is bound at residue D313. Positions 315 and 317 each coordinate N-formimidoyl-L-glutamate. Residue T318 participates in 4-imidazolone-5-propanoate binding.

It belongs to the metallo-dependent hydrolases superfamily. HutI family. Requires Zn(2+) as cofactor. The cofactor is Fe(3+).

Its subcellular location is the cytoplasm. It catalyses the reaction 4-imidazolone-5-propanoate + H2O = N-formimidoyl-L-glutamate. It participates in amino-acid degradation; L-histidine degradation into L-glutamate; N-formimidoyl-L-glutamate from L-histidine: step 3/3. Functionally, catalyzes the hydrolytic cleavage of the carbon-nitrogen bond in imidazolone-5-propanoate to yield N-formimidoyl-L-glutamate. It is the third step in the universal histidine degradation pathway. The chain is Imidazolonepropionase from Xanthomonas oryzae pv. oryzae (strain MAFF 311018).